Reading from the N-terminus, the 311-residue chain is Mediator of RNA polymerase II transcription subunit 27 (311 aa).

Belongs to the Mediator complex subunit 27 family. In terms of assembly, component of the Mediator complex.

It is found in the nucleus. Functionally, component of the Mediator complex, a coactivator involved in the regulated transcription of nearly all RNA polymerase II-dependent genes. Mediator functions as a bridge to convey information from gene-specific regulatory proteins to the basal RNA polymerase II transcription machinery. Mediator is recruited to promoters by direct interactions with regulatory proteins and serves as a scaffold for the assembly of a functional preinitiation complex with RNA polymerase II and the general transcription factors. The chain is Mediator of RNA polymerase II transcription subunit 27 (med27) from Xenopus tropicalis (Western clawed frog).